Consider the following 324-residue polypeptide: Phosphate transport system permease protein PstC (324 aa).

Helical transmembrane passes span 29-49, 87-107, 126-146, 173-193, 235-255, and 291-311; these read LLLTAAVAFVLIALVSAALSM, IVTALIAMLIAMPVSLGIAFF, LLAGIPSIIYGMWGLFVLVPV, PLGIGTLTAGFVLAIMVIPFI, VIGGMFLGLGRALGETMAVAF, and SALLLLGFVLFIVTFAVLVIA. In terms of domain architecture, ABC transmembrane type-1 spans 83–311; sequence IYGTIVTALI…IVTFAVLVIA (229 aa).

Belongs to the binding-protein-dependent transport system permease family. CysTW subfamily.

The protein resides in the cell inner membrane. In terms of biological role, part of a binding-protein-dependent transport system for phosphate; probably responsible for the translocation of the substrate across the membrane. The protein is Phosphate transport system permease protein PstC (pstC) of Xylella fastidiosa (strain Temecula1 / ATCC 700964).